A 153-amino-acid polypeptide reads, in one-letter code: Large ribosomal subunit protein uL13 (153 aa).

Residues 128–153 (SEHPHEAQSPEVLDVTSMNSKNTRSA) form a disordered region. The span at 143–153 (TSMNSKNTRSA) shows a compositional bias: polar residues.

Belongs to the universal ribosomal protein uL13 family. As to quaternary structure, part of the 50S ribosomal subunit.

This protein is one of the early assembly proteins of the 50S ribosomal subunit, although it is not seen to bind rRNA by itself. It is important during the early stages of 50S assembly. The protein is Large ribosomal subunit protein uL13 of Roseobacter denitrificans (strain ATCC 33942 / OCh 114) (Erythrobacter sp. (strain OCh 114)).